The following is a 371-amino-acid chain: Aminomethyltransferase (371 aa).

Belongs to the GcvT family. In terms of assembly, the glycine cleavage system is composed of four proteins: P, T, L and H.

The catalysed reaction is N(6)-[(R)-S(8)-aminomethyldihydrolipoyl]-L-lysyl-[protein] + (6S)-5,6,7,8-tetrahydrofolate = N(6)-[(R)-dihydrolipoyl]-L-lysyl-[protein] + (6R)-5,10-methylene-5,6,7,8-tetrahydrofolate + NH4(+). In terms of biological role, the glycine cleavage system catalyzes the degradation of glycine. This Pectobacterium atrosepticum (strain SCRI 1043 / ATCC BAA-672) (Erwinia carotovora subsp. atroseptica) protein is Aminomethyltransferase.